The chain runs to 235 residues: Putative N-acetylmannosamine-6-phosphate 2-epimerase (235 aa).

It belongs to the NanE family.

It carries out the reaction an N-acyl-D-glucosamine 6-phosphate = an N-acyl-D-mannosamine 6-phosphate. It participates in amino-sugar metabolism; N-acetylneuraminate degradation; D-fructose 6-phosphate from N-acetylneuraminate: step 3/5. Functionally, converts N-acetylmannosamine-6-phosphate (ManNAc-6-P) to N-acetylglucosamine-6-phosphate (GlcNAc-6-P). This chain is Putative N-acetylmannosamine-6-phosphate 2-epimerase, found in Photobacterium profundum (strain SS9).